The primary structure comprises 546 residues: CTP synthase (546 aa).

Residues 1–269 (MNSNTKIIFV…DAKLVELLNL (269 aa)) form an amidoligase domain region. Serine 16 provides a ligand contact to CTP. Serine 16 serves as a coordination point for UTP. ATP-binding positions include 17 to 22 (SLGKGV) and aspartate 74. Mg(2+) is bound by residues aspartate 74 and glutamate 143. CTP-binding positions include 150–152 (DIE), 190–195 (KTKPTQ), and lysine 226. Residues 190–195 (KTKPTQ) and lysine 226 each bind UTP. A Glutamine amidotransferase type-1 domain is found at 294–546 (TIAMVGKYVS…IQAAIENSNN (253 aa)). An L-glutamine-binding site is contributed by glycine 356. Cysteine 383 acts as the Nucleophile; for glutamine hydrolysis in catalysis. L-glutamine-binding positions include 384 to 387 (LGMQ), glutamate 407, and arginine 474. Residues histidine 519 and glutamate 521 contribute to the active site.

The protein belongs to the CTP synthase family. As to quaternary structure, homotetramer.

It catalyses the reaction UTP + L-glutamine + ATP + H2O = CTP + L-glutamate + ADP + phosphate + 2 H(+). The catalysed reaction is L-glutamine + H2O = L-glutamate + NH4(+). It carries out the reaction UTP + NH4(+) + ATP = CTP + ADP + phosphate + 2 H(+). It functions in the pathway pyrimidine metabolism; CTP biosynthesis via de novo pathway; CTP from UDP: step 2/2. Allosterically activated by GTP, when glutamine is the substrate; GTP has no effect on the reaction when ammonia is the substrate. The allosteric effector GTP functions by stabilizing the protein conformation that binds the tetrahedral intermediate(s) formed during glutamine hydrolysis. Inhibited by the product CTP, via allosteric rather than competitive inhibition. Functionally, catalyzes the ATP-dependent amination of UTP to CTP with either L-glutamine or ammonia as the source of nitrogen. Regulates intracellular CTP levels through interactions with the four ribonucleotide triphosphates. This Francisella tularensis subsp. mediasiatica (strain FSC147) protein is CTP synthase.